A 347-amino-acid chain; its full sequence is Quinolinate synthase (347 aa).

Iminosuccinate-binding residues include H47 and S68. Residue C113 coordinates [4Fe-4S] cluster. Residues 139-141 (YAN) and S156 each bind iminosuccinate. C200 serves as a coordination point for [4Fe-4S] cluster. Residues 226–228 (HPE) and T243 each bind iminosuccinate. Residue C297 participates in [4Fe-4S] cluster binding.

Belongs to the quinolinate synthase family. Type 1 subfamily. Requires [4Fe-4S] cluster as cofactor.

The protein resides in the cytoplasm. The enzyme catalyses iminosuccinate + dihydroxyacetone phosphate = quinolinate + phosphate + 2 H2O + H(+). It functions in the pathway cofactor biosynthesis; NAD(+) biosynthesis; quinolinate from iminoaspartate: step 1/1. Catalyzes the condensation of iminoaspartate with dihydroxyacetone phosphate to form quinolinate. This chain is Quinolinate synthase, found in Salmonella choleraesuis (strain SC-B67).